Reading from the N-terminus, the 88-residue chain is MAHKKAGGSSRNGRDSAGRRLGVKKFGSEAVIPGNIIVRQRGTKWHPGTNVGMGKDHTLFALVPGKVQFETRRGREFVTVVPLAQAAE.

Residues 1-23 (MAHKKAGGSSRNGRDSAGRRLGV) are disordered.

This sequence belongs to the bacterial ribosomal protein bL27 family.

The polypeptide is Large ribosomal subunit protein bL27 (Methylorubrum populi (strain ATCC BAA-705 / NCIMB 13946 / BJ001) (Methylobacterium populi)).